The chain runs to 450 residues: Protein W (450 aa).

The segment at 53-92 is disordered; the sequence is SGESEQVEGGMSKDDGDVERRNLEDLSSTSPTDGTIGKRV. The span at 63–76 shows a compositional bias: basic and acidic residues; that stretch reads MSKDDGDVERRNLE. Residue Ser257 is modified to Phosphoserine; by host. The segment at 265 to 324 is disordered; sequence ISPEDEEPSSVGGKPNESIGRTIEGQSIRDNLQAKDNKSTDVPGAGPKDSAVKEEPPQKR. The residue at position 350 (Ser350) is a Phosphoserine; by host. Disordered stretches follow at residues 384-403 and 429-450; these read VQTA…RGIP and PGMF…RMSN. A compositionally biased stretch (basic residues) spans 438–450; it reads TKKARVSMRRMSN. The Nuclear localization signal motif lies at 439–442; the sequence is KKAR.

In terms of assembly, interacts with host STAT1.

It is found in the host nucleus. Functionally, prevent the establishment of cellular antiviral state by blocking the interferon-alpha/beta (IFN-alpha/beta). Interacts with host STAT1 protein in the nucleus, blocking it's phosphorylation by IFN-alpha/beta. Also blocks antiviral state induced by Toll-like receptor 3/TLR3 binding to dsRNA. The chain is Protein W (P/V/C) from Cynopterus brachyotis (Lesser short-nosed fruit bat).